The chain runs to 568 residues: MRQTMTFIPTLKEVPADAEVKSHQLLLRAGFIRQTASGIYSYLPLATLMLRKIETIIREELEAIGAAELLMPALQPAELWQESGRWNDYGPELMRLKDRASRDFALGPTHEEVITALLRDEVKSYKRLPLTLYQIQTKFRDEKRPRFGLLRGREFIMKDAYSFHATSESLDEVYNLMHQAYSNIFTRCGLEFRSVIADSGSIGGNESKEFMALSDIGEDTIAYSDASDYAANTEMAPVLYMEKKSHELEKDLEKVATPDQKSITDIVGFLEVPIEKTMKSMLYQVDDEVIMVLVRGDHEVNDIKIKNALDATNVELVDPAVAVELLGANFGSLGPINVPENMRVFADNAVKDIVNAVVGANEDGFHYINVNPDRDFSVTSYFDLRMIQVGDLSPDGQGVIKFAEGIEVGHIFKLGTKYSEAMNATILDENGRAQPIIMGCYGIGVSRILSAIAEQSNDENGFVWDKQISPFDLHLIPVNMKSEEQVAFAETLYTSLQDAGFSVLIDDRAERAGVKFADADLIGLPIRITVGKKAAEGVVEVKIRKTGEMIEVRQDELLNTLPILFGDK.

Belongs to the class-II aminoacyl-tRNA synthetase family. ProS type 1 subfamily. In terms of assembly, homodimer.

It is found in the cytoplasm. The catalysed reaction is tRNA(Pro) + L-proline + ATP = L-prolyl-tRNA(Pro) + AMP + diphosphate. Functionally, catalyzes the attachment of proline to tRNA(Pro) in a two-step reaction: proline is first activated by ATP to form Pro-AMP and then transferred to the acceptor end of tRNA(Pro). As ProRS can inadvertently accommodate and process non-cognate amino acids such as alanine and cysteine, to avoid such errors it has two additional distinct editing activities against alanine. One activity is designated as 'pretransfer' editing and involves the tRNA(Pro)-independent hydrolysis of activated Ala-AMP. The other activity is designated 'posttransfer' editing and involves deacylation of mischarged Ala-tRNA(Pro). The misacylated Cys-tRNA(Pro) is not edited by ProRS. This chain is Proline--tRNA ligase, found in Listeria monocytogenes serovar 1/2a (strain ATCC BAA-679 / EGD-e).